Reading from the N-terminus, the 545-residue chain is Phenylalanine--tRNA ligase beta subunit (545 aa).

A B5 domain is found at 266-342 (LSPALRNINV…IGAGFGNLEA (77 aa)). D320, D326, E329, and D330 together coordinate Mg(2+).

Belongs to the phenylalanyl-tRNA synthetase beta subunit family. Type 2 subfamily. Tetramer of two alpha and two beta subunits. The cofactor is Mg(2+).

The protein resides in the cytoplasm. It carries out the reaction tRNA(Phe) + L-phenylalanine + ATP = L-phenylalanyl-tRNA(Phe) + AMP + diphosphate + H(+). The polypeptide is Phenylalanine--tRNA ligase beta subunit (Methanospirillum hungatei JF-1 (strain ATCC 27890 / DSM 864 / NBRC 100397 / JF-1)).